Reading from the N-terminus, the 315-residue chain is Glycerol-3-phosphate dehydrogenase [NAD(P)+] (315 aa).

NADPH is bound by residues Trp24, Arg44, Arg45, and Lys92. Sn-glycerol 3-phosphate-binding residues include Lys92 and Gly120. Ser124 provides a ligand contact to NADPH. Sn-glycerol 3-phosphate contacts are provided by Lys175, Asp228, Ser238, Arg239, and Asn240. The Proton acceptor role is filled by Lys175. Arg239 is a binding site for NADPH. Glu265 lines the NADPH pocket.

This sequence belongs to the NAD-dependent glycerol-3-phosphate dehydrogenase family.

The protein localises to the cytoplasm. The catalysed reaction is sn-glycerol 3-phosphate + NAD(+) = dihydroxyacetone phosphate + NADH + H(+). It catalyses the reaction sn-glycerol 3-phosphate + NADP(+) = dihydroxyacetone phosphate + NADPH + H(+). The protein operates within membrane lipid metabolism; glycerophospholipid metabolism. Functionally, catalyzes the reduction of the glycolytic intermediate dihydroxyacetone phosphate (DHAP) to sn-glycerol 3-phosphate (G3P), the key precursor for phospholipid synthesis. In Synechococcus sp. (strain JA-2-3B'a(2-13)) (Cyanobacteria bacterium Yellowstone B-Prime), this protein is Glycerol-3-phosphate dehydrogenase [NAD(P)+].